Reading from the N-terminus, the 136-residue chain is Selenoprotein M (136 aa).

Positions 1–19 (MWLPLPLLLGLLQLQPILS) are cleaved as a signal peptide. Active-site nucleophile residues include cysteine 38 and selenocysteine 41. A cross-link (cysteinyl-selenocysteine (Cys-Sec)) is located at residues 38–41 (CGGU). Position 41 (selenocysteine 41) is a non-standard amino acid, selenocysteine. A disordered region spans residues 111–136 (SSPDAPVPAEFKMAPARASGDTKEDL). The Prevents secretion from ER motif lies at 133–136 (KEDL).

Belongs to the selenoprotein M/F family.

The protein resides in the endoplasmic reticulum. Its function is as follows. May function as a thiol-disulfide oxidoreductase that participates in disulfide bond formation. The protein is Selenoprotein M (selenom) of Xenopus laevis (African clawed frog).